We begin with the raw amino-acid sequence, 321 residues long: Cytochrome f (321 aa).

The N-terminal stretch at 1 to 38 (MKKNFYTISKTMSRSLKLILFSVFIGFSIFLIPQPTWA) is a signal peptide. Residues Tyr39, Cys59, Cys62, and His63 each contribute to the heme site. The helical transmembrane segment at 288 to 308 (VIGMIIFFIGVGLSQIMLVLK) threads the bilayer.

This sequence belongs to the cytochrome f family. In terms of assembly, the 4 large subunits of the cytochrome b6-f complex are cytochrome b6, subunit IV (17 kDa polypeptide, PetD), cytochrome f and the Rieske protein, while the 4 small subunits are PetG, PetL, PetM and PetN. The complex functions as a dimer. It depends on heme as a cofactor.

Its subcellular location is the cellular thylakoid membrane. In terms of biological role, component of the cytochrome b6-f complex, which mediates electron transfer between photosystem II (PSII) and photosystem I (PSI), cyclic electron flow around PSI, and state transitions. The polypeptide is Cytochrome f (Prochlorococcus marinus (strain NATL1A)).